The primary structure comprises 240 residues: Transcription factor bHLH47 (240 aa).

Residues 1–13 (MVSKTPSTSSDEA) are compositionally biased toward polar residues. The disordered stretch occupies residues 1–26 (MVSKTPSTSSDEANATADERCRKGKV). The region spanning 27-77 (PKRINKAVRERLKREHLNELFIELADTLELNQQNSGKASILCEATRFLKDV) is the bHLH domain. Positions 98-131 (VTTEKNELKEETSVLETEISKLQNEIEARANQSK) form a coiled coil. Residues 128–138 (NQSKPDLNTSP) are compositionally biased toward polar residues. Residues 128 to 153 (NQSKPDLNTSPAPEYHHHHYQQQHPE) are disordered.

In terms of assembly, homodimer. Forms heterodimer with PYEL proteins bHLH115, bHLH104 and ILR3. As to expression, expressed constitutively in roots, leaves, stems, and flowers.

Its subcellular location is the nucleus. This chain is Transcription factor bHLH47 (BHLH47), found in Arabidopsis thaliana (Mouse-ear cress).